We begin with the raw amino-acid sequence, 123 residues long: NHL-repeat-containing protein 4 (123 aa).

2 NHL repeats span residues 35-78 (QPLG…FPRA) and 79-119 (GPPI…YQGL).

The protein is NHL-repeat-containing protein 4 (NHLRC4) of Homo sapiens (Human).